Consider the following 222-residue polypeptide: Peptidyl-prolyl cis-trans isomerase FKBP7 (222 aa).

The N-terminal stretch at Met-1 to Ala-23 is a signal peptide. N-linked (GlcNAc...) asparagine glycosylation is present at Asn-45. Residues Gly-53–Thr-145 enclose the PPIase FKBP-type domain. EF-hand domains are found at residues Thr-145–Lys-180 and Tyr-189–Leu-222. Residues Asp-158, Asp-160, Asp-162, Gln-164, Glu-169, Asp-202, Asp-204, Asp-206, and Glu-213 each coordinate Ca(2+). A Prevents secretion from ER motif is present at residues His-219–Leu-222.

In terms of processing, glycosylated.

It is found in the endoplasmic reticulum lumen. The catalysed reaction is [protein]-peptidylproline (omega=180) = [protein]-peptidylproline (omega=0). In terms of biological role, PPIases accelerate the folding of proteins during protein synthesis. This is Peptidyl-prolyl cis-trans isomerase FKBP7 (FKBP7) from Pongo abelii (Sumatran orangutan).